The sequence spans 60 residues: DNA-directed RNA polymerase subunit Rpo6 (60 aa).

Belongs to the archaeal Rpo6/eukaryotic RPB6 RNA polymerase subunit family. Part of the RNA polymerase complex.

The protein localises to the cytoplasm. It carries out the reaction RNA(n) + a ribonucleoside 5'-triphosphate = RNA(n+1) + diphosphate. DNA-dependent RNA polymerase (RNAP) catalyzes the transcription of DNA into RNA using the four ribonucleoside triphosphates as substrates. This is DNA-directed RNA polymerase subunit Rpo6 from Halobacterium salinarum (strain ATCC 700922 / JCM 11081 / NRC-1) (Halobacterium halobium).